Consider the following 234-residue polypeptide: MKIIRVQDQIEGGKIAFTLLKDSLAKGAKTLGLATGSSPISFYQEMVKSPLDFSDLTSINLDEYVGLSVESDQSYDYFMRQNLFNAKPFKKNYLPNGLATNIEAEAKRYDQIIAEHPIDFQVLGIGRNGHIGFNEPGTSFKEETHVVDLQESTIEANSRFFTSIEDVPKQAISMGIASIMKSKMIVLLAFGQEKADAIKGMVFGPITEDLPASILQKHDHVIVIVDEAAASQLD.

The active-site Proton acceptor; for enolization step is the D62. N128 acts as the For ring-opening step in catalysis. Residue H130 is the Proton acceptor; for ring-opening step of the active site. Residue E135 is the For ring-opening step of the active site.

This sequence belongs to the glucosamine/galactosamine-6-phosphate isomerase family. NagB subfamily.

The catalysed reaction is alpha-D-glucosamine 6-phosphate + H2O = beta-D-fructose 6-phosphate + NH4(+). Its pathway is amino-sugar metabolism; N-acetylneuraminate degradation; D-fructose 6-phosphate from N-acetylneuraminate: step 5/5. In terms of biological role, catalyzes the reversible isomerization-deamination of glucosamine 6-phosphate (GlcN6P) to form fructose 6-phosphate (Fru6P) and ammonium ion. The protein is Glucosamine-6-phosphate deaminase of Streptococcus pyogenes serotype M18 (strain MGAS8232).